The following is a 234-amino-acid chain: tRNA (guanine-N(1)-)-methyltransferase (234 aa).

S-adenosyl-L-methionine-binding positions include Gly-115 and 135–140 (VGDYIL).

This sequence belongs to the RNA methyltransferase TrmD family. Homodimer.

It localises to the cytoplasm. It catalyses the reaction guanosine(37) in tRNA + S-adenosyl-L-methionine = N(1)-methylguanosine(37) in tRNA + S-adenosyl-L-homocysteine + H(+). Functionally, specifically methylates guanosine-37 in various tRNAs. The polypeptide is tRNA (guanine-N(1)-)-methyltransferase (Rickettsia rickettsii (strain Iowa)).